The sequence spans 689 residues: Glycine--tRNA ligase beta subunit (689 aa).

Belongs to the class-II aminoacyl-tRNA synthetase family. As to quaternary structure, tetramer of two alpha and two beta subunits.

Its subcellular location is the cytoplasm. It catalyses the reaction tRNA(Gly) + glycine + ATP = glycyl-tRNA(Gly) + AMP + diphosphate. In Pectobacterium atrosepticum (strain SCRI 1043 / ATCC BAA-672) (Erwinia carotovora subsp. atroseptica), this protein is Glycine--tRNA ligase beta subunit.